The chain runs to 173 residues: Crossover junction endodeoxyribonuclease RuvC (173 aa).

Active-site residues include D8, E67, and D139. Positions 8, 67, and 139 each coordinate Mg(2+).

Belongs to the RuvC family. As to quaternary structure, homodimer which binds Holliday junction (HJ) DNA. The HJ becomes 2-fold symmetrical on binding to RuvC with unstacked arms; it has a different conformation from HJ DNA in complex with RuvA. In the full resolvosome a probable DNA-RuvA(4)-RuvB(12)-RuvC(2) complex forms which resolves the HJ. Mg(2+) is required as a cofactor.

The protein resides in the cytoplasm. It catalyses the reaction Endonucleolytic cleavage at a junction such as a reciprocal single-stranded crossover between two homologous DNA duplexes (Holliday junction).. Functionally, the RuvA-RuvB-RuvC complex processes Holliday junction (HJ) DNA during genetic recombination and DNA repair. Endonuclease that resolves HJ intermediates. Cleaves cruciform DNA by making single-stranded nicks across the HJ at symmetrical positions within the homologous arms, yielding a 5'-phosphate and a 3'-hydroxyl group; requires a central core of homology in the junction. The consensus cleavage sequence is 5'-(A/T)TT(C/G)-3'. Cleavage occurs on the 3'-side of the TT dinucleotide at the point of strand exchange. HJ branch migration catalyzed by RuvA-RuvB allows RuvC to scan DNA until it finds its consensus sequence, where it cleaves and resolves the cruciform DNA. The sequence is that of Crossover junction endodeoxyribonuclease RuvC from Salmonella agona (strain SL483).